Reading from the N-terminus, the 289-residue chain is BTB/POZ domain-containing protein KCTD7 (289 aa).

Positions 1-42 (MVVVTGREPDSRHSDGAMSSSEAEDDFLEPATPTATQAGHGL) are disordered. The BTB domain occupies 53-141 (VPLNIGGAHF…YAIGPLLEQL (89 aa)).

Interacts with CUL3. High expression in brain, particularly in post-mitotic neurons. Expressed in the mitral cells of the olfactory bulbs, the hippocampus, the deep layers of the cerebral cortex and Purkinje cells of the cerebellum. Not detected in astrocytes or microglial cells. Also expressed in heart, liver, spleen and kidney.

Its subcellular location is the cell membrane. The protein localises to the cytoplasm. It localises to the cytosol. In terms of biological role, may be involved in the control of excitability of cortical neurons. The protein is BTB/POZ domain-containing protein KCTD7 (Kctd7) of Mus musculus (Mouse).